The chain runs to 670 residues: Leucine-rich repeat-containing protein 45 (670 aa).

LRR repeat units follow at residues T58 to R80, V87 to G107, S115 to F136, A145 to L166, T173 to N194, and T201 to I212. Positions R252–Q645 form a coiled coil. S661 carries the post-translational modification Phosphoserine; by NEK2.

Homomer. Interacts with CROCC/rootletin and CEP250. Interacts with CEP44. Interacts with CCDC102B (via N-terminus). Post-translationally, phosphorylated by NEK2 during misosis, phosphorylation reduces centrosomal localization which subsequently leads to centrosome separation.

The protein resides in the cytoplasm. It is found in the cytoskeleton. The protein localises to the microtubule organizing center. Its subcellular location is the centrosome. Its function is as follows. Component of the proteinaceous fiber-like linker between two centrioles, required for centrosome cohesion. The sequence is that of Leucine-rich repeat-containing protein 45 (LRRC45) from Homo sapiens (Human).